The sequence spans 500 residues: Tyrosine decarboxylase 2 (500 aa).

2 repeat units span residues 65–122 (EDIR…TELE) and 125–176 (VLDW…GKRS). The segment at 65 to 176 (EDIRQKIVPG…KFLNRFGKRS (112 aa)) is 2 X approximate tandem repeats. Ser-89 contacts substrate. Ala-153 and Ser-154 together coordinate pyridoxal 5'-phosphate. His-189 serves as a coordination point for substrate. Positions 248 and 302 each coordinate pyridoxal 5'-phosphate. Residue Lys-305 is modified to N6-(pyridoxal phosphate)lysine.

Belongs to the group II decarboxylase family. Pyridoxal 5'-phosphate is required as a cofactor. As to expression, mostly expressed in bulbs, and, to a lower extent, in stems, roots, leaves and flowers.

It carries out the reaction L-tyrosine + H(+) = tyramine + CO2. It participates in alkaloid biosynthesis. In terms of biological role, catalyzes the decarboxylation of L-tyrosine to tyramine, which is converted to norbelladine, a precursor to all Amaryllidaceae alkaloids such as galanthamine, lycorine and haemanthamine, and including haemanthamine- and crinamine-type alkaloids, promising anticancer agents. The sequence is that of Tyrosine decarboxylase 2 from Narcissus pseudonarcissus (Daffodil).